The sequence spans 158 residues: SsrA-binding protein (158 aa).

Belongs to the SmpB family.

It localises to the cytoplasm. Functionally, required for rescue of stalled ribosomes mediated by trans-translation. Binds to transfer-messenger RNA (tmRNA), required for stable association of tmRNA with ribosomes. tmRNA and SmpB together mimic tRNA shape, replacing the anticodon stem-loop with SmpB. tmRNA is encoded by the ssrA gene; the 2 termini fold to resemble tRNA(Ala) and it encodes a 'tag peptide', a short internal open reading frame. During trans-translation Ala-aminoacylated tmRNA acts like a tRNA, entering the A-site of stalled ribosomes, displacing the stalled mRNA. The ribosome then switches to translate the ORF on the tmRNA; the nascent peptide is terminated with the 'tag peptide' encoded by the tmRNA and targeted for degradation. The ribosome is freed to recommence translation, which seems to be the essential function of trans-translation. The chain is SsrA-binding protein from Caldicellulosiruptor bescii (strain ATCC BAA-1888 / DSM 6725 / KCTC 15123 / Z-1320) (Anaerocellum thermophilum).